We begin with the raw amino-acid sequence, 490 residues long: MAPLQAIRKYDYLVIGGGSGGVASARRAASYGAKVLLIESKFNKMGGTCVNVGCVPKKVMWYAGDLAEKRHHLKSYGLSTTDDKVKYGDFDWSTFKDKRDAYVKRLNGIYERNLKNEGVDYIYGFAHFANSNGDVEVTLTGDQELSFLEEGKEFKKDEKLVFAGSKTLIATGGYAINPPNVEGHELGTTSDGFFELQKQPKSVAVVGAGYIGVELSGIFKALGSETHLVIRGDTVLRSFDESIQNSITDYYTDKLGVNIIKQSGSVSKVEKIDGDRKKITLGNGQVLEVDELIWTMGRKSLINIGLDKVGVTLNDKQQVDVDQFQQTANPNIFSLGDVIGKVELTPVAIAAGRRLSNRLFSGDKAFENDHLDYSNVPSVIFSHPEAGSIGLSCKEAKEKYGEDQIKIYKSKFNAMYYAMMEDDSLKSPTSYKVVCAGEDEKVVGLHIVGDSSAEILQGFGVAIKMGATKKDFDSCVAIHPTSAEELVTMK.

FAD-binding residues include Ser19 and Gly20. Ser19 contacts glutathione. Arg26 is a binding site for glutathione. 4 residues coordinate FAD: Glu39, Thr48, Cys49, and Lys57. A disulfide bridge connects residues Cys49 and Cys54. Tyr110 serves as a coordination point for glutathione. Residue Ala126 coordinates FAD. NADP(+) is bound by residues Ala208, Ile211, Glu214, Arg231, and Arg237. Residue Ser246 participates in glutathione binding. Residue Gly297 participates in NADP(+) binding. Asp337 contacts FAD. Glu343 lines the NADP(+) pocket. Thr345 provides a ligand contact to FAD. Glutathione is bound at residue Arg353. Val379 contacts NADP(+). Lys432 serves as a coordination point for glutathione. His479 is an FAD binding site. His479 functions as the Proton acceptor in the catalytic mechanism.

Belongs to the class-I pyridine nucleotide-disulfide oxidoreductase family. In terms of assembly, homodimer. FAD serves as cofactor.

The protein localises to the cytoplasm. The protein resides in the mitochondrion. The catalysed reaction is 2 glutathione + NADP(+) = glutathione disulfide + NADPH + H(+). Functionally, catalyzes the reduction of glutathione disulfide (GSSG) to reduced glutathione (GSH). Constitutes the major mechanism to maintain a high GSH:GSSG ratio in the cytosol. The sequence is that of Glutathione reductase (GLR1) from Debaryomyces hansenii (strain ATCC 36239 / CBS 767 / BCRC 21394 / JCM 1990 / NBRC 0083 / IGC 2968) (Yeast).